The sequence spans 273 residues: Elongation factor Ts (273 aa).

The interval 80 to 83 (TDFV) is involved in Mg(2+) ion dislocation from EF-Tu.

The protein belongs to the EF-Ts family.

Its subcellular location is the cytoplasm. Functionally, associates with the EF-Tu.GDP complex and induces the exchange of GDP to GTP. It remains bound to the aminoacyl-tRNA.EF-Tu.GTP complex up to the GTP hydrolysis stage on the ribosome. The protein is Elongation factor Ts of Tropheryma whipplei (strain Twist) (Whipple's bacillus).